The sequence spans 570 residues: MFASGHTTPRLGIDLAGGTSITLRAVPEAGQESAINKTNMDTAVEIMNRRVNGLGVSEAEVQTQGDRNIIVYIPKGTNSKEARQQVGTTAKLYFRPVLATELSGANATGTPSASETGGASDKATDKATDKATDKATDGDKATDGDKASGTPSDSASASATSQGRAASDALKADPSPSATSSDGASPSPSASASGDDATAKLQQQYAALDCTDKNARAKAGDGAKPDEQTVACGQNSQGQWQKYILGAAAVDGTEVDEAEAVYNTQTAAGWTVTMKFTDKGSKKFADITGKLAQNQSPQNQFAIVLDNEVVSDPYVSQALTGGNAEISGSFDQEEAQSLANMLSYGALPLTFKEDSVTTVTAALGGEQLKAGLIAGAIGLALVVLYLLFYYRGLSFIAVCSLLVSAGLTYVIMALLGPTIGFALNLPAVCGAIVAIGITADSFIVYFERVRDEIREGRTLRPAVERAWPRARRTILVSDFVSFLAAAVLFIVTVGKVQGFAFTLGLTTLLDVVVVFLFTKPLLTLMARRKFFASGHKWSGLDPKALGAKPPLRRTRRPSRPAAGPVDPKEA.

Positions 104–117 are enriched in polar residues; that stretch reads GANATGTPSASETG. The interval 104-198 is disordered; that stretch reads GANATGTPSA…SASASGDDAT (95 aa). The span at 122-146 shows a compositional bias: basic and acidic residues; that stretch reads KATDKATDKATDKATDGDKATDGDK. Low complexity-rich tracts occupy residues 147–161 and 172–196; these read ASGT…SATS and ADPS…SGDD. Helical transmembrane passes span 370-390, 395-415, 419-439, 474-494, and 498-518; these read AGLI…LFYY, FIAV…MALL, IGFA…GITA, ILVS…VTVG, and GFAF…FLFT. A disordered region spans residues 540–570; it reads LDPKALGAKPPLRRTRRPSRPAAGPVDPKEA.

Belongs to the SecD/SecF family. SecD subfamily. As to quaternary structure, forms a complex with SecF. Part of the essential Sec protein translocation apparatus which comprises SecA, SecYEG and auxiliary proteins SecDF. Other proteins may also be involved.

The protein localises to the cell membrane. Its function is as follows. Part of the Sec protein translocase complex. Interacts with the SecYEG preprotein conducting channel. SecDF uses the proton motive force (PMF) to complete protein translocation after the ATP-dependent function of SecA. This chain is Protein translocase subunit SecD, found in Streptomyces coelicolor (strain ATCC BAA-471 / A3(2) / M145).